A 702-amino-acid chain; its full sequence is Polyribonucleotide nucleotidyltransferase (702 aa).

Mg(2+) is bound by residues Asp-485 and Asp-491. The KH domain occupies 552–612; that stretch reads PRTEIICIDP…EGVKKAISII (61 aa). The S1 motif domain occupies 622–690; it reads GEIYLGKVTK…NQGRINLSRK (69 aa).

The protein belongs to the polyribonucleotide nucleotidyltransferase family. The cofactor is Mg(2+).

It is found in the cytoplasm. It carries out the reaction RNA(n+1) + phosphate = RNA(n) + a ribonucleoside 5'-diphosphate. Involved in mRNA degradation. Catalyzes the phosphorolysis of single-stranded polyribonucleotides processively in the 3'- to 5'-direction. This is Polyribonucleotide nucleotidyltransferase from Clostridium botulinum (strain Langeland / NCTC 10281 / Type F).